A 335-amino-acid chain; its full sequence is MWATLPLLCAGAWLLGVPVCGAAELCVNSLEKFHFKSWMSKHRKTYSTEEYHHRLQTFASNWRKINAHNNGNHTFKMALNQFSDMSFAEIKHKYLWSEPQNCSATKSNYLRGTGPYPPSVDWRKKGNFVSPVKNQGACGSCWTFSTTGALESAIAIATGKMLSLAEQQLVDCAQDFNNHGCQGGLPSQAFEYILYNKGIMGEDTYPYQGKDGYCKFQPGKAIGFVKDVANITIYDEEAMVEAVALYNPVSFAFEVTQDFMMYRTGIYSSTSCHKTPDKVNHAVLAVGYGEKNGIPYWIVKNSWGPQWGMNGYFLIERGKNMCGLAACASYPIPLV.

The signal sequence occupies residues 1-22 (MWATLPLLCAGAWLLGVPVCGA). A propeptide spans 23-97 (AELCVNSLEK…AEIKHKYLWS (75 aa)) (activation peptide). N101 carries N-linked (GlcNAc...) asparagine glycosylation. Intrachain disulfides connect C102–C327, C138–C181, C172–C214, and C272–C322. The propeptide occupies 106–115 (KSNYLRGTGP). C141 is a catalytic residue. Residue N230 is glycosylated (N-linked (GlcNAc...) asparagine). Residues H281 and N301 contribute to the active site.

This sequence belongs to the peptidase C1 family. As to quaternary structure, composed of a mini chain and a large chain. The large chain may be split into heavy and light chain. All chains are held together by disulfide bonds.

The protein localises to the lysosome. It catalyses the reaction Hydrolysis of proteins, acting as an aminopeptidase (notably, cleaving Arg-|-Xaa bonds) as well as an endopeptidase.. In terms of biological role, important for the overall degradation of proteins in lysosomes. This chain is Pro-cathepsin H (CTSH), found in Homo sapiens (Human).